Reading from the N-terminus, the 208-residue chain is NAD(P)H-quinone oxidoreductase subunit I (208 aa).

4Fe-4S ferredoxin-type domains follow at residues 55 to 84 (GRIH…VDWV) and 95 to 124 (RNYS…MTEE). 8 residues coordinate [4Fe-4S] cluster: C64, C67, C70, C74, C104, C107, C110, and C114.

The protein belongs to the complex I 23 kDa subunit family. In terms of assembly, NDH-1 is composed of at least 11 different subunits. It depends on [4Fe-4S] cluster as a cofactor.

Its subcellular location is the cellular thylakoid membrane. It catalyses the reaction a plastoquinone + NADH + (n+1) H(+)(in) = a plastoquinol + NAD(+) + n H(+)(out). It carries out the reaction a plastoquinone + NADPH + (n+1) H(+)(in) = a plastoquinol + NADP(+) + n H(+)(out). In terms of biological role, NDH-1 shuttles electrons from an unknown electron donor, via FMN and iron-sulfur (Fe-S) centers, to quinones in the respiratory and/or the photosynthetic chain. The immediate electron acceptor for the enzyme in this species is believed to be plastoquinone. Couples the redox reaction to proton translocation, and thus conserves the redox energy in a proton gradient. In Prochlorococcus marinus subsp. pastoris (strain CCMP1986 / NIES-2087 / MED4), this protein is NAD(P)H-quinone oxidoreductase subunit I.